A 1275-amino-acid polypeptide reads, in one-letter code: Streptococcal hemoprotein receptor (1275 aa).

The N-terminal stretch at 1-26 (MKKISKCAFVAISALVLIQATQTVKS) is a signal peptide. The segment at 61 to 123 (GKEYYKHIEK…KKDGDILITF (63 aa)) is HID 1. The heme site is built by threonine 87, arginine 196, tyrosine 197, and methionine 238. Residues 203-269 (IKALTQQITK…KGFEDVTITV (67 aa)) are HID 2. The 133-residue stretch at 369 to 501 (LTEGTYTLNF…DMTFSKTVTK (133 aa)) folds into the NEAT 1 domain. 11 LRR repeats span residues 544-567 (LEQIRGELRLDHYELTDISLLKHA), 568-590 (KNITELHLDGNQITEIPKELFSQ), 592-614 (KQLRFLNLRSNHLTYLDKDTFKS), 616-638 (AQLRELYLSSNFIHSLEGGLFQS), 639-662 (LHHLEQLDLSKNRIGRLCDNPFEG), 664-686 (SRLTSLGFAENSLEEIPEKALEP), 687-710 (LTSLNFIDLSQNNLALLPKTIEKL), 712-733 (ALSTIVASRNHITRIDNISFKN), 734-757 (LPKLSVLDLSTNEISNLPNGIFKQ), 759-781 (NQLTKLDFFNNLLTQVEESVFPD), and 783-804 (ETLNLDVKFNQIKSVSPKVRAL). The region spanning 976 to 1138 (LRDGIYYLNA…TTEKAKVVKE (163 aa)) is the NEAT 2 domain. Disordered stretches follow at residues 1137–1174 (KETNNPQENSHLTSTDQLKGPQNRQQEKTPTSPPSAAT), 1186–1205 (KATGQSTQETSKTDDTDKAE), and 1210–1248 (LVRDHQTSIEGKTAKDTKTKKSDKKHRSNQQSNGEESSS). A compositionally biased stretch (polar residues) spans 1138-1166 (ETNNPQENSHLTSTDQLKGPQNRQQEKTP). Basic and acidic residues-rich tracts occupy residues 1196–1205 (SKTDDTDKAE) and 1210–1229 (LVRDHQTSIEGKTAKDTKTK). The helical transmembrane segment at 1250–1269 (YHLIAGLSSFMIVALGFIIG) threads the bilayer.

Its subcellular location is the cell membrane. Its activity is regulated as follows. May modulate heme uptake according to heme availability. In the presence of high heme concentrations, NEAT 1 facilitates fast heme delivery to Shp, whereas NEAT 2 serves as a temporary storage for heme on the bacterial surface. When heme availability is limiting, heme from NEAT 2 is transferred back to NEAT 1 and from there to Shp. In terms of biological role, hemoprotein receptor that plays a central role in the acquisition of host heme, a source of iron during bacterial infection, and is therefore an important virulence factor. Captures host hemoproteins and their iron-containing heme molecules, and transfers the heme to the cell surface heme-binding protein Shp. Plays a pivotal role in iron acquisition and growth under iron-starvation conditions. Uses a cap and release mechanism in which Shr forms a dynamic complex with hemoglobin that enables the gated release of its most labile heme molecule. This mechanism exploits the hemoglobin beta subunit's inherent weaker affinity for heme, allowing S.pyogenes to preferentially capture only heme-saturated forms of hemoglobin that contain iron. In vitro, binds directly to a variety of heme-containing proteins, including hemoglobin, myoglobin, heme albumin and the hemoglobin-haptoglobin complex. It also binds to and acquires heme from methemoglobin, the ferric form of hemoglobin, which is likely to be a physiologically relevant heme source for the hemolytic group A streptococcus (GAS). Seems to have an inherent ability to reduce the ferric heme present in methemoglobin to ferrous heme and to provide a stable environment for the produced ferrous complex. Does not bind apohemoglobin, apohaptoglobin, fibrinogen or streptavidin, indicating that it specifically recognizes hemoproteins. Its function is as follows. In addition to its role in heme acquisition, functions as an adhesin, contributing to host cell adhesion and hence virulence. Specifically binds to extracellular matrix (ECM) components, including fibronectin and laminin, and mediates bacterial attachment to host epithelial cells. The chain is Streptococcal hemoprotein receptor from Streptococcus pyogenes serotype M1.